The sequence spans 396 residues: Elongation factor Tu (396 aa).

One can recognise a tr-type G domain in the interval 11-205 (KPHVNIGTIG…VVDEYIPTPK (195 aa)). The G1 stretch occupies residues 20–27 (GHVDHGKT). 20–27 (GHVDHGKT) is a binding site for GTP. Residue Thr27 coordinates Mg(2+). The G2 stretch occupies residues 61-65 (GITIN). A G3 region spans residues 82-85 (DAPG). GTP is bound by residues 82–86 (DAPGH) and 137–140 (NKTD). Residues 137 to 140 (NKTD) form a G4 region. Positions 175 to 177 (SAL) are G5.

The protein belongs to the TRAFAC class translation factor GTPase superfamily. Classic translation factor GTPase family. EF-Tu/EF-1A subfamily. Monomer.

It localises to the cytoplasm. It catalyses the reaction GTP + H2O = GDP + phosphate + H(+). GTP hydrolase that promotes the GTP-dependent binding of aminoacyl-tRNA to the A-site of ribosomes during protein biosynthesis. This is Elongation factor Tu from Limosilactobacillus fermentum (strain NBRC 3956 / LMG 18251) (Lactobacillus fermentum).